A 222-amino-acid chain; its full sequence is UPF0502 protein XAC4278 (222 aa).

This sequence belongs to the UPF0502 family.

This chain is UPF0502 protein XAC4278, found in Xanthomonas axonopodis pv. citri (strain 306).